The sequence spans 298 residues: CCR4-NOT transcription complex subunit 9 (298 aa).

The protein belongs to the CNOT9 family. In terms of assembly, homodimer. Component of the CCR4-NOT complex.

It is found in the nucleus. It localises to the cytoplasm. The protein resides in the P-body. Component of the CCR4-NOT complex which is one of the major cellular mRNA deadenylases and is linked to various cellular processes including bulk mRNA degradation, miRNA-mediated repression, translational repression during translational initiation and general transcription regulation. Additional complex functions may be a consequence of its influence on mRNA expression. Involved in down-regulation of MYB- and JUN-dependent transcription. Enhances ligand-dependent transcriptional activity of nuclear hormone receptors. May play a role in cell differentiation. The sequence is that of CCR4-NOT transcription complex subunit 9 from Danio rerio (Zebrafish).